The following is a 356-amino-acid chain: Inactive ubiquitin thioesterase OTULINL (356 aa).

A disordered region spans residues 1-22 (MAATRSPTRARERERSGAPAAG). The segment at 1-83 (MAATRSPTRA…KWWIGYLQRK (83 aa)) is required for membrane binding. Residues 128-356 (KCVRQVRRDN…NDRHYHIPVF (229 aa)) enclose the OTU domain.

It belongs to the peptidase C65 family. Otulin subfamily. Does not bind ubiquitin or ubiquitin-like proteins.

The protein resides in the cytoplasm. The protein localises to the endoplasmic reticulum membrane. It localises to the nucleus envelope. Functionally, lacks deubiquitinase activity. The chain is Inactive ubiquitin thioesterase OTULINL from Homo sapiens (Human).